The following is a 311-amino-acid chain: Thioredoxin reductase (311 aa).

An FAD-binding site is contributed by 33-43; the sequence is EGFFSGISGGQ. Cysteine 138 and cysteine 141 are oxidised to a cystine. 283-292 contacts FAD; sequence DVQDKYYRQA.

The protein belongs to the class-II pyridine nucleotide-disulfide oxidoreductase family. Homodimer. Requires FAD as cofactor.

It is found in the cytoplasm. The enzyme catalyses [thioredoxin]-dithiol + NADP(+) = [thioredoxin]-disulfide + NADPH + H(+). The chain is Thioredoxin reductase (trxB) from Chlamydia pneumoniae (Chlamydophila pneumoniae).